We begin with the raw amino-acid sequence, 183 residues long: Ribonuclease H (183 aa).

The RNase H type-1 domain occupies 2–151 (SQARFIAFSD…VDQLAQAAAR (150 aa)). Mg(2+) is bound by residues Asp-11, Glu-57, Asp-79, and Asp-143.

It belongs to the RNase H family. As to quaternary structure, monomer. Mg(2+) is required as a cofactor.

It is found in the cytoplasm. The enzyme catalyses Endonucleolytic cleavage to 5'-phosphomonoester.. Endonuclease that specifically degrades the RNA of RNA-DNA hybrids. The polypeptide is Ribonuclease H (Anaeromyxobacter dehalogenans (strain 2CP-1 / ATCC BAA-258)).